A 55-amino-acid polypeptide reads, in one-letter code: ACIPRGEICTDDCECCGCDNECYCPIGSSLGIFKCSCAHANKYFCNRKKEKCKKA.

5 disulfides stabilise this stretch: cysteine 2–cysteine 16, cysteine 9–cysteine 22, cysteine 15–cysteine 37, cysteine 24–cysteine 35, and cysteine 45–cysteine 52.

As to expression, expressed by the venom gland.

It localises to the secreted. Antagonist of L-type calcium channels (Cav1/CACNA1). In vivo, causes paralysis in posterior limbs, and gradual decrease in movement and aggression during 24 hours after intracerebroventricular injection in mice at dose levels of 3 ug per mouse. This chain is Omega-ctenitoxin-Pr2a, found in Phoneutria reidyi (Brazilian Amazonian armed spider).